The following is a 977-amino-acid chain: Glutamate receptor 2 (977 aa).

A signal peptide spans 1-19 (MNKNLLVFGFLIFVKIGET). Residues 20–621 (SKKFPLRAFV…FSFMEPLGMT (602 aa)) lie on the Extracellular side of the membrane. 6 N-linked (GlcNAc...) asparagine glycosylation sites follow: asparagine 36, asparagine 227, asparagine 291, asparagine 427, asparagine 532, and asparagine 566. A helical transmembrane segment spans residues 622 to 642 (IWIFTLSSYFGVSLTIFLVSW). At 643–695 (FSPYEKRIEFKRGEFTVTNEFTLYNSLWFTLAAFMQQGTDILPRAVSGRIASS) the chain is on the cytoplasmic side. A helical membrane pass occupies residues 696 to 716 (CWWFFTLIIVSSYTANLAAFL). Residues 717–898 (TLERMTPPIE…GTSSSLNLSK (182 aa)) are Extracellular-facing. N-linked (GlcNAc...) asparagine glycosylation is found at asparagine 783 and asparagine 895. Residues 899–919 (VAGIFYILLAGMVLSMCTALV) form a helical membrane-spanning segment. Over 920 to 977 (EFLFRKNKENREKERNRMRSSRPLKPGILASCERAKQKQLQNRRTKSEEVSTPRSTLF) the chain is Cytoplasmic. The tract at residues 954 to 977 (AKQKQLQNRRTKSEEVSTPRSTLF) is disordered.

It belongs to the glutamate-gated ion channel (TC 1.A.10.1) family. Command interneurons of the locomotory control circuit (AIA, AIB, AVA, AVD, AVE, PVC, RIA, RIG and RIR) and motor neurons (AVG, M1, RMDD and RMDV).

It is found in the membrane. It localises to the postsynaptic cell membrane. Its function is as follows. L-glutamate acts as an excitatory neurotransmitter at many synapses in the central nervous system. The postsynaptic actions of glutamate are mediated by a variety of receptors that are named according to their selective agonists. Required for response to mechanical and osmotic stimuli. This is Glutamate receptor 2 (glr-2) from Caenorhabditis elegans.